We begin with the raw amino-acid sequence, 271 residues long: Probable esterase D14L (271 aa).

Residue Ser-96 is the Nucleophile of the active site. Catalysis depends on residues Asp-218 and His-247.

The protein belongs to the AB hydrolase superfamily. In terms of assembly, component of an intracellular receptor complex involved in the detection of the smoke compound karrikin. Expressed constitutively in all organs (e.g. roots, stems, leaves, panicles and embryos).

Its subcellular location is the nucleus. The protein localises to the cytoplasm. In terms of biological role, may be involved in strigolactone signaling pathway. Essential for plant responses to karrikins, a class of butenolide compounds, structurally similar to strigolactones, released from burning vegetation that stimulate seed germination and enhance seedling photomorphogenesis. Mediates a specific perception of karrikin. Required for the establishment of symbiosis with the arbuscular mycorrhizal fungi (AMF) Rhizophagus irregularis and Gigaspora rosea. Karrikin binding induces a conformational change. In Oryza sativa subsp. japonica (Rice), this protein is Probable esterase D14L (D14L).